We begin with the raw amino-acid sequence, 336 residues long: Flavonoid 4'-O-methyltransferase 5 (336 aa).

Residues Tyr-140 and Asp-203 each contribute to the S-adenosyl-L-methionine site. Catalysis depends on His-241, which acts as the Proton acceptor.

It belongs to the class I-like SAM-binding methyltransferase superfamily. Cation-independent O-methyltransferase family. As to quaternary structure, homodimer. In terms of tissue distribution, expressed in leaves.

It catalyses the reaction genkwanin + S-adenosyl-L-methionine = apigenin 4',7-dimethyl ether + S-adenosyl-L-homocysteine. The enzyme catalyses cirsiliol + S-adenosyl-L-methionine = eupatorin + S-adenosyl-L-homocysteine + H(+). It carries out the reaction cirsimaritin + S-adenosyl-L-methionine = salvigenin + S-adenosyl-L-homocysteine + H(+). The catalysed reaction is scutellarein 7-methyl ether + S-adenosyl-L-methionine = ladanein + S-adenosyl-L-homocysteine + H(+). It catalyses the reaction (2S)-sakuranetin + S-adenosyl-L-methionine = (2S)-naringenin 4',7-dimethyl ether + S-adenosyl-L-homocysteine + H(+). The protein operates within flavonoid metabolism. Substrate inhibition by genkwanin (GENK) at concentrations above 10 mM. Functionally, flavonoid 4'-O-methyltransferase involved in the biosynthesis of polymethoxylated flavonoids natural products such as nevadensin and salvigenin, aroma compounds which contribute to the flavor of sweet basil, and exhibit pharmacological activities such as anti-allergic, anti-oxidant, antibacterial, anti-proliferative, and anti-inflammatory effects. Catalyzes S-adenosylmethionine-dependent regioselective 4'-O-methylation of flavonoids; active on various hydroxylated flavonoid substrates, including scutellarein-7-methyl ether (SCU7Me) and, with a lower efficiency, cirsimaritin (CIRM), sakuranetin (NAR7Me), ladanein (LAD) and genkwanin (GENK). The sequence is that of Flavonoid 4'-O-methyltransferase 5 from Ocimum basilicum (Sweet basil).